The chain runs to 485 residues: Cysteine--tRNA ligase (485 aa).

C28 serves as a coordination point for Zn(2+). The 'HIGH' region motif lies at 30 to 40; sequence MTVYDYCHLGH. C212, H237, and E241 together coordinate Zn(2+). The 'KMSKS' region motif lies at 269–273; the sequence is KMSKS. K272 is an ATP binding site.

The protein belongs to the class-I aminoacyl-tRNA synthetase family. Monomer. The cofactor is Zn(2+).

It is found in the cytoplasm. It carries out the reaction tRNA(Cys) + L-cysteine + ATP = L-cysteinyl-tRNA(Cys) + AMP + diphosphate. The sequence is that of Cysteine--tRNA ligase from Bordetella bronchiseptica (strain ATCC BAA-588 / NCTC 13252 / RB50) (Alcaligenes bronchisepticus).